The following is a 360-amino-acid chain: Peptide chain release factor 1 (360 aa).

Residue Gln-235 is modified to N5-methylglutamine. A compositionally biased stretch (basic and acidic residues) spans 285–295 (RQAAEQTDMRR). Residues 285 to 309 (RQAAEQTDMRRNLLGSGDRSDKIRT) form a disordered region.

It belongs to the prokaryotic/mitochondrial release factor family. Post-translationally, methylated by PrmC. Methylation increases the termination efficiency of RF1.

It localises to the cytoplasm. Functionally, peptide chain release factor 1 directs the termination of translation in response to the peptide chain termination codons UAG and UAA. The polypeptide is Peptide chain release factor 1 (prfA) (Haemophilus influenzae (strain ATCC 51907 / DSM 11121 / KW20 / Rd)).